The following is a 495-amino-acid chain: Neuronal acetylcholine receptor subunit alpha-3 (495 aa).

Positions 1–21 (MARRSRLRRLLLLLLLPVAST) are cleaved as a signal peptide. Residues 22–240 (SDAEHRLFER…PLFYTINLII (219 aa)) are Extracellular-facing. Residues N45 and N162 are each glycosylated (N-linked (GlcNAc...) asparagine). Cystine bridges form between C149/C163 and C213/C214. Residues 241-256 (PCLLISFLTVLVFYLP) traverse the membrane as a helical segment. At 257–258 (SD) the chain is on the cytoplasmic side. The helical transmembrane segment at 259–275 (CGEKVTLCISVLLSLTV) threads the bilayer. Na(+) is bound at residue E261. Residues 276 to 297 (FLLVITETIPSTSLVIPLIGEY) lie on the Extracellular side of the membrane. The chain crosses the membrane as a helical span at residues 298–316 (LLFTMIFVTLSIVITVFVL). Topologically, residues 317 to 464 (NVHYRTPTTH…QDDWKYVAMV (148 aa)) are cytoplasmic. Phosphoserine occurs at positions 403 and 406. Residues 465–483 (IDRIFLWVFILVCILGTAG) form a helical membrane-spanning segment. Residues 484–495 (LFLQPLMTRDDA) are Extracellular-facing.

This sequence belongs to the ligand-gated ion channel (TC 1.A.9) family. Acetylcholine receptor (TC 1.A.9.1) subfamily. Alpha-3/CHRNA3 sub-subfamily. In terms of assembly, neuronal AChR is composed of two different types of subunits: alpha and beta. CHRNA3/Alpha-3 subunit can be combined to CHRNB2/beta-2 or CHRNB4/beta-4 to give rise to functional receptors. Part of a complex composed of STUB1/CHIP, VCP/p97, CHRNA3, and UBXN2A that modulates the ubiquitination and endoplasmic reticulum-associated degradation (ERAD) of CHRNA3. Within the complex UBXN2A acts as a scaffold protein required for the interaction of CHRNA3 with VCP/p97, this interaction also inhibits CHRNA3 ubiquitination by STUB1/CHIP and subsequently ERAD. Interacts with UBXN2A (via SEP domain), the interaction is required for the interaction of CHRNA3 in the STUB1:VCP:UBXN2A complex. Interacts with RIC3; which is required for proper folding and assembly. Interacts with LYPD6. Ubiquitinated; by STUB1/CHIP and thereafter degraded by the 26S proteosome complex.

Its subcellular location is the synaptic cell membrane. The protein resides in the cell membrane. The protein localises to the endoplasmic reticulum. It is found in the golgi apparatus. It catalyses the reaction K(+)(in) = K(+)(out). The enzyme catalyses Na(+)(in) = Na(+)(out). It carries out the reaction Ca(2+)(in) = Ca(2+)(out). Its activity is regulated as follows. Activated by a myriad of ligands such as acetylcholine, cytisine, nicotine, choline and epibatidine. The heteropentamer CHRNA3:CHRNB2 activity is blocked by alpha-conotoxins ImI, ImII, PnIA, GID and MII. The heteropentamer CHRNA3:CHRNB4 activity is blocked by the alpha-conotoxin ImI and AuIB. Component of neuronal acetylcholine receptors (nAChRs) that function as pentameric, ligand-gated cation channels with high calcium permeability among other activities. nAChRs are excitatory neurotrasnmitter receptors formed by a collection of nAChR subunits known to mediate synaptic transmission in the nervous system and the neuromuscular junction. Each nAchR subunit confers differential attributes to channel properties, including activation, deactivation and desensitization kinetics, pH sensitivity, cation permeability, and binding to allosteric modulators. CHRNA3 forms heteropentameric neuronal acetylcholine receptors with CHRNB2 and CHRNB4. CHRNA3:CHRNB4 being predominant in neurons of the autonomic ganglia, it is known as ganglionic nicotinic receptor. CHRNA3:CHRNB4 also plays an important role in the habenulo-interpeduncular tract, modulating the mesolimbic dopamine system and affecting reward circuits and addiction. Hypothalamic CHRNA3:CHRNB4 nAChR activation by nicotine leads to activation of POMC neurons and a decrease in food intake. Also expressed in the urothelium where it modulates reflex bladder activity by increasing intracellular calcium through extracellular influx and basal ATP release. This Bos taurus (Bovine) protein is Neuronal acetylcholine receptor subunit alpha-3 (CHRNA3).